We begin with the raw amino-acid sequence, 377 residues long: N5-carboxyaminoimidazole ribonucleotide synthase (377 aa).

ATP is bound by residues Arg93, Lys133, 138-144 (GYDGKGQ), 175-178 (EEFV), Glu183, His206, and 257-258 (NE). The ATP-grasp domain maps to 97–287 (KALLDHAGVR…QFENHLRAVC (191 aa)).

It belongs to the PurK/PurT family. Homodimer.

It carries out the reaction 5-amino-1-(5-phospho-beta-D-ribosyl)imidazole + hydrogencarbonate + ATP = 5-carboxyamino-1-(5-phospho-D-ribosyl)imidazole + ADP + phosphate + 2 H(+). The protein operates within purine metabolism; IMP biosynthesis via de novo pathway; 5-amino-1-(5-phospho-D-ribosyl)imidazole-4-carboxylate from 5-amino-1-(5-phospho-D-ribosyl)imidazole (N5-CAIR route): step 1/2. Functionally, catalyzes the ATP-dependent conversion of 5-aminoimidazole ribonucleotide (AIR) and HCO(3)(-) to N5-carboxyaminoimidazole ribonucleotide (N5-CAIR). The chain is N5-carboxyaminoimidazole ribonucleotide synthase from Vibrio vulnificus (strain CMCP6).